A 437-amino-acid polypeptide reads, in one-letter code: MPVPELPPPRSSLPEAVTRFGASVLGAVAARAHDSEATVGGPSGGRPLPSPPAGLSFGPPSPAAPPTDVPAPEAPGWGADLERLLCGPHGLGTAGLRLTPGKERPVPATAREGRPIPGLYHHPVPEPDEARVEEVSRRIKAWALDEVSLYPEEWEEQFDGFSVGRYMVGCHPDAPTVDHLMLATRLMVAENAVDDCYCEDHGGSPVGLGERLLLAHTALDPLYTAREYQPGWAASLHADAPRRAYRSAMDYFVRAAGPSQADRLRHDMARLHLGYLAEAAWAQQDQVPEVWEYLAMRQFNNFRPCPTITDTVGGYELPADLHAQAAMQKVIALASNATTIVNDLYSYTKELAAPGRHLNLPVVIAEREGLSDQDAYLKSVEIHNELMHAFESEAAALAAACPVPSVQRFLRGVAAWVDGNHHWHRSNTYRYSLPDFW.

The interval A32 to P125 is disordered. Positions P59 to E73 are enriched in pro residues. 6 residues coordinate Mg(2+): D194, D195, E199, N342, S346, and E350.

Belongs to the terpene synthase family. 2-methylisoborneol synthase subfamily. Mg(2+) is required as a cofactor.

It catalyses the reaction (E)-2-methylgeranyl diphosphate + H2O = 2-methylisoborneol + diphosphate. Catalyzes the cyclization of 2-methylgeranyl diphosphate (2-MeGPP) to 2-methylisoborneol (2-MIB), which likely involves the intermediacy of 2-methyllinalyl diphosphate. This Streptomyces griseus protein is 2-methylisoborneol synthase.